A 258-amino-acid polypeptide reads, in one-letter code: Exu regulon transcriptional regulator (258 aa).

Positions 7–75 (RRLYQQLAAD…KGSGIHVVSN (69 aa)) constitute an HTH gntR-type domain. Positions 35–54 (ERFIADEKNVSRTVVREAII) form a DNA-binding region, H-T-H motif.

Repressor for the exu regulon that encode genes involved in hexuronate utilization. It regulates the ExuT, UxaCA and UxuRAB operons. Binds D-tagaturonate and D-fructuronate as inducers. The protein is Exu regulon transcriptional regulator (exuR) of Escherichia coli O157:H7.